Consider the following 574-residue polypeptide: 5'-nucleotidase (574 aa).

Residues 1-26 form the signal peptide; the sequence is MNPGAARTPALRILALGALLWPAARP. Zn(2+) contacts are provided by aspartate 36 and histidine 38. A disulfide bridge links cysteine 51 with cysteine 57. N-linked (GlcNAc...) asparagine glycosylation occurs at asparagine 53. The Zn(2+) site is built by aspartate 85, asparagine 117, histidine 220, and histidine 243. Asparagine 311 and asparagine 333 each carry an N-linked (GlcNAc...) asparagine glycan. Cystine bridges form between cysteine 353-cysteine 358 and cysteine 365-cysteine 387. Residue arginine 354 participates in AMP binding. Arginine 354 provides a ligand contact to IMP. AMP is bound by residues asparagine 390 and arginine 395. Asparagine 390 and arginine 395 together coordinate IMP. Asparagine 403 is a glycosylation site (N-linked (GlcNAc...) asparagine). Position 417 (phenylalanine 417) interacts with AMP. Position 417 (phenylalanine 417) interacts with IMP. Cysteine 476 and cysteine 479 are disulfide-bonded. Residues phenylalanine 500 and aspartate 506 each coordinate AMP. IMP-binding residues include phenylalanine 500 and aspartate 506. A lipid anchor (GPI-anchor amidated serine) is attached at serine 549. The propeptide at 550–574 is removed in mature form; that stretch reads AGSHCCGSFSLIFLSVLAVIIILYQ.

This sequence belongs to the 5'-nucleotidase family. In terms of assembly, homodimer. Zn(2+) is required as a cofactor.

Its subcellular location is the cell membrane. It carries out the reaction a ribonucleoside 5'-phosphate + H2O = a ribonucleoside + phosphate. It catalyses the reaction a 2'-deoxyribonucleoside 5'-phosphate + H2O = a 2'-deoxyribonucleoside + phosphate. The catalysed reaction is dTMP + H2O = thymidine + phosphate. The enzyme catalyses CMP + H2O = cytidine + phosphate. It carries out the reaction IMP + H2O = inosine + phosphate. It catalyses the reaction AMP + H2O = adenosine + phosphate. The catalysed reaction is GMP + H2O = guanosine + phosphate. The enzyme catalyses UMP + H2O = uridine + phosphate. It carries out the reaction dAMP + H2O = 2'-deoxyadenosine + phosphate. It catalyses the reaction dCMP + H2O = 2'-deoxycytidine + phosphate. Its function is as follows. Catalyzes the hydrolysis of nucleotide monophosphates, releasing inorganic phosphate and the corresponding nucleoside, with AMP being the preferred substrate. Shows a preference for ribonucleotide monophosphates over their equivalent deoxyribose forms. Other substrates include IMP, UMP, GMP, CMP, dAMP, dCMP, dTMP, NAD and NMN. This is 5'-nucleotidase (NT5E) from Bos taurus (Bovine).